We begin with the raw amino-acid sequence, 516 residues long: MLNPKVAYMVWMTCLGLTLPSQAQSNDYRPSYHFTPDQYWMNEPNGLIKIGSTWHLFFQHNPTANVWGNICWGHATSTDLMHWAHKPTAIADENGVEAFTGTAYYDPNNTSGLGDSANPPYLAWFTGYTTSSQTQDQRLAFSVDNGATWTKFQGNPIISTSQEAPHDITGGLESRDPKVFFHRQSGNWIMVLAHGGQDKLSFWTSADTINWTWQSDLKSTSINGLSSDITGWEVPDMFELPVEGTEETTWVVMMTPAEGSPAGGNGVLAITGSFDGKSFTADPVDASTMWLDNGRDFDGALSWVNVPASDGRRIIAAVMNSYGSNPPTTTWKGMLSFPRTLSLKKVGTQQHFVQQPITELDTISTSLQILANQTITPGQTLLSSIRGTALDVRVAFYPDAGSVLSLAVRKGASEQTVIKYTQSDATLSVDRTESGDISYDPAAGGVHTAKLEEDGTGLVSIRVLVDTCSVEVFGGQGEAVISDLIFPSDSSDGLALEVTGGNAVLQSVDVRSVSLE.

The N-terminal stretch at 1–23 (MLNPKVAYMVWMTCLGLTLPSQA) is a signal peptide. Residues 41–43 (MNE) and Asn-61 each bind substrate. Glu-43 is an active-site residue. 2 N-linked (GlcNAc...) asparagine glycosylation sites follow: Asn-108 and Asn-109. Substrate is bound at residue Asp-176. The N-linked (GlcNAc...) asparagine glycan is linked to Asn-210. Residue Asn-320 coordinates substrate. The N-linked (GlcNAc...) asparagine glycan is linked to Asn-372.

It belongs to the glycosyl hydrolase 32 family.

The protein localises to the secreted. The catalysed reaction is Endohydrolysis of (2-&gt;1)-beta-D-fructosidic linkages in inulin.. Functionally, endo-inulinase involved in utilization of the plant storage polymer inulin, consisting of fructooligosaccharides with a degree of polymerization (DP) value from 2 to 60. The chain is Extracellular endo-inulinase inu2 (inu2) from Aspergillus ficuum.